Consider the following 268-residue polypeptide: MVSLTTYCLKNIVNQHAHVENTVLLYHLGLRWNCKTLYQCIQCNGVNYINSHSDQCKNKDLFLMKVIVKKNLAVARTLLSWGASPEYARLFCRNAEEEQALNLQHVADIPSSKILERLTMSYKENDEQLLITFYLLNLSTKFSTNLHEQVRFNIVSYIICDLAIHQTFKTFYAKNYSLSTLYCIFLAIYYKLYMALRKMVKIYPGLKPFAYLIGFMFDDETVTQTYSSTDDEILECKNKIIVIKGCYGNIHCRSDIDHMYAFSQNNFW.

The Cytoplasmic portion of the chain corresponds to 1 to 175 (MVSLTTYCLK…QTFKTFYAKN (175 aa)). Residues 176–193 (YSLSTLYCIFLAIYYKLY) traverse the membrane as a helical segment. The Extracellular segment spans residues 194–268 (MALRKMVKIY…MYAFSQNNFW (75 aa)).

Belongs to the asfivirus MGF 300 family.

Its subcellular location is the host membrane. Its function is as follows. Plays a role in virus cell tropism, and may be required for efficient virus replication in macrophages. The protein is Protein MGF 300-1L of African swine fever virus (isolate Tick/Malawi/Lil 20-1/1983) (ASFV).